Consider the following 506-residue polypeptide: Maturase K (506 aa).

The protein belongs to the intron maturase 2 family. MatK subfamily.

It localises to the plastid. It is found in the chloroplast. Usually encoded in the trnK tRNA gene intron. Probably assists in splicing its own and other chloroplast group II introns. This is Maturase K from Trifolium spumosum (Mediterranean clover).